Reading from the N-terminus, the 453-residue chain is Carbamoyl phosphate synthase arginine-specific small chain (453 aa).

The transit peptide at M1–G33 directs the protein to the mitochondrion. Positions L26–A50 are disordered. S97, G280, and G282 together coordinate L-glutamine. Positions H233–N420 constitute a Glutamine amidotransferase type-1 domain. C309 acts as the Nucleophile in catalysis. L-glutamine contacts are provided by L310, Q313, N351, G353, and Y354. Catalysis depends on residues H393 and E395.

This sequence belongs to the CarA family. As to quaternary structure, heterodimer composed of 2 chains; the small (or glutamine) chain promotes the hydrolysis of glutamine to ammonia, which is used by the large (or ammonia) chain to synthesize carbamoyl phosphate.

It is found in the mitochondrion matrix. It carries out the reaction hydrogencarbonate + L-glutamine + 2 ATP + H2O = carbamoyl phosphate + L-glutamate + 2 ADP + phosphate + 2 H(+). The catalysed reaction is L-glutamine + H2O = L-glutamate + NH4(+). It participates in amino-acid biosynthesis; L-arginine biosynthesis; carbamoyl phosphate from bicarbonate: step 1/1. Its function is as follows. Small subunit of the arginine-specific carbamoyl phosphate synthase (CPSase). CPSase catalyzes the formation of carbamoyl phosphate from the ammonia moiety of glutamine, carbonate, and phosphate donated by ATP, the first step of the arginine biosynthetic pathway. The small subunit (glutamine amidotransferase) binds and cleaves glutamine to supply the large subunit with the substrate ammonia. This Neurospora crassa (strain ATCC 24698 / 74-OR23-1A / CBS 708.71 / DSM 1257 / FGSC 987) protein is Carbamoyl phosphate synthase arginine-specific small chain (arg-2).